We begin with the raw amino-acid sequence, 506 residues long: Catalase (506 aa).

Catalysis depends on residues histidine 73 and asparagine 146. Tyrosine 356 lines the heme pocket. Positions 504-506 (SKF) match the Microbody targeting signal motif.

Belongs to the catalase family. As to quaternary structure, homotetramer. The cofactor is heme.

Its subcellular location is the peroxisome matrix. The enzyme catalyses 2 H2O2 = O2 + 2 H2O. Catalyzes the degradation of hydrogen peroxide (H(2)O(2)) generated by peroxisomal oxidases to water and oxygen, thereby protecting cells from the toxic effects of hydrogen peroxide. The polypeptide is Catalase (Cat) (Drosophila melanogaster (Fruit fly)).